We begin with the raw amino-acid sequence, 264 residues long: uncharacterized protein (264 aa).

Positions methionine 1–alanine 23 are cleaved as a signal peptide.

This is an uncharacterized protein from Shewanella oneidensis (strain ATCC 700550 / JCM 31522 / CIP 106686 / LMG 19005 / NCIMB 14063 / MR-1).